Here is a 189-residue protein sequence, read N- to C-terminus: Dynactin subunit 6 (189 aa).

It belongs to the dynactin subunits 5/6 family. Dynactin subunit 6 subfamily. In terms of assembly, subunit of dynactin, a multiprotein complex part of a tripartite complex with dynein and a adapter, such as BICDL1, BICD2 or HOOK3. The dynactin complex is built around ACTR1A/ACTB filament and consists of an actin-related filament composed of a shoulder domain, a pointed end and a barbed end.

It localises to the cytoplasm. The protein localises to the cytoskeleton. Its function is as follows. Part of the dynactin complex that activates the molecular motor dynein for ultra-processive transport along microtubules. This Dictyostelium discoideum (Social amoeba) protein is Dynactin subunit 6 (dynF).